The following is a 415-amino-acid chain: Phosphoglycerate kinase (415 aa).

Substrate is bound by residues 28-30, Arg-44, 67-70, Arg-124, and Arg-164; these read DLN and HQGR. ATP is bound by residues Glu-336 and 362 to 365; that span reads GGHF.

The protein belongs to the phosphoglycerate kinase family.

Its subcellular location is the cytoplasm. It carries out the reaction (2R)-3-phosphoglycerate + ATP = (2R)-3-phospho-glyceroyl phosphate + ADP. The protein operates within carbohydrate degradation; glycolysis; pyruvate from D-glyceraldehyde 3-phosphate: step 2/5. In Aeropyrum pernix (strain ATCC 700893 / DSM 11879 / JCM 9820 / NBRC 100138 / K1), this protein is Phosphoglycerate kinase (pgk).